The sequence spans 655 residues: Fidgetin-like protein 1 (655 aa).

Positions 289-313 (QQKKHSNQPQRNPGPLYGGGKKSLG) are disordered. Residues A385 and 425–430 (GTGKTL) contribute to the ATP site.

The protein belongs to the AAA ATPase family. In terms of assembly, hexamer. Mg(2+) serves as cofactor.

Its subcellular location is the nucleus. It is found in the cytoplasm. The protein localises to the perinuclear region. The enzyme catalyses ATP + H2O = ADP + phosphate + H(+). Functionally, may be involved in DNA double-strand break (DBS) repair via homologous recombination (HR). May regulate osteoblast proliferation and differentiation. This Xenopus laevis (African clawed frog) protein is Fidgetin-like protein 1 (fignl1).